The chain runs to 226 residues: DNA mismatch repair protein MutH (226 aa).

This sequence belongs to the MutH family.

It is found in the cytoplasm. Its function is as follows. Sequence-specific endonuclease that cleaves unmethylated GATC sequences. It is involved in DNA mismatch repair. The chain is DNA mismatch repair protein MutH from Haemophilus ducreyi (strain 35000HP / ATCC 700724).